The primary structure comprises 84 residues: Cell division topological specificity factor (84 aa).

Belongs to the MinE family.

Its function is as follows. Prevents the cell division inhibition by proteins MinC and MinD at internal division sites while permitting inhibition at polar sites. This ensures cell division at the proper site by restricting the formation of a division septum at the midpoint of the long axis of the cell. This Burkholderia mallei (strain NCTC 10247) protein is Cell division topological specificity factor.